The primary structure comprises 351 residues: Outer membrane porin protein 32 (351 aa).

Residues 1 to 19 form the signal peptide; the sequence is MKKSLIALAVLAASGAAMA. Position 20 is a pyrrolidone carboxylic acid (Gln-20).

This sequence to bacterial outer membrane proteins and porins. As to quaternary structure, homotrimer.

It localises to the cell outer membrane. In terms of biological role, forms anion selective channels. This is Outer membrane porin protein 32 (omp32) from Delftia acidovorans (Pseudomonas acidovorans).